Reading from the N-terminus, the 154-residue chain is Ribosome maturation factor RimP (154 aa).

The protein belongs to the RimP family.

It localises to the cytoplasm. Required for maturation of 30S ribosomal subunits. This Hydrogenobaculum sp. (strain Y04AAS1) protein is Ribosome maturation factor RimP.